Consider the following 378-residue polypeptide: REST corepressor 3 (378 aa).

The region spanning 1 to 83 (MRVGAEYQAR…KSLADLPNFT (83 aa)) is the ELM2 domain. The 52-residue stretch at 84–135 (PFPDEWTVEDKVLFEQAFSFHGKSFHRIQQMLPDKTIASLVKYYYSWKKTRS) folds into the SANT domain. The disordered stretch occupies residues 147-219 (LANRNNQGDS…SQRSKCRPPK (73 aa)). The span at 162 to 184 (EPHPMDGNDSDYDPKKEAKKEGN) shows a compositional bias: basic and acidic residues. The span at 205-217 (QHRHHSQRSKCRP) shows a compositional bias: basic residues. Positions 238–273 (ANTILRRLDMELISLKRQVQNAKQVNSALKQKMEGG) form a coiled coil. The tract at residues 337–356 (TASSTSCCSCSPPSASAAPT) is disordered.

It belongs to the CoREST family.

The protein resides in the nucleus. In terms of biological role, may act as a component of a corepressor complex that represses transcription. In Gallus gallus (Chicken), this protein is REST corepressor 3 (RCOR3).